A 455-amino-acid chain; its full sequence is UPF0053 protein MT1890 (455 aa).

Residues 2–205 enclose the CNNM transmembrane domain; the sequence is NLTDTVATIL…ARSGALDDAT (204 aa). 4 helical membrane-spanning segments follow: residues 6-26, 68-88, 106-126, and 148-168; these read TVATILAILALTAGTGVFVAA, LGISITTLATGYLTEPLVAEL, LITFFALVIVTSLSMVFGELV, and LFSLLLTPAIRLTNGAANWIV. CBS domains lie at 224-285 and 286-346; these read MTPR…AHTL and LTTV…VRDE.

Belongs to the UPF0053 family.

It is found in the cell membrane. The polypeptide is UPF0053 protein MT1890 (Mycobacterium tuberculosis (strain CDC 1551 / Oshkosh)).